The following is a 198-amino-acid chain: Na(+)-translocating NADH-quinone reductase subunit E (198 aa).

6 helical membrane passes run 11–31 (AVFI…FLAV), 39–59 (FGLG…NNLV), 77–97 (FLNF…LEMI), 109–129 (LGIF…VSFM), 140–160 (IVYG…LASI), and 176–196 (LGVT…FSGV).

Belongs to the NqrDE/RnfAE family. In terms of assembly, composed of six subunits; NqrA, NqrB, NqrC, NqrD, NqrE and NqrF.

It is found in the cell inner membrane. It carries out the reaction a ubiquinone + n Na(+)(in) + NADH + H(+) = a ubiquinol + n Na(+)(out) + NAD(+). Its function is as follows. NQR complex catalyzes the reduction of ubiquinone-1 to ubiquinol by two successive reactions, coupled with the transport of Na(+) ions from the cytoplasm to the periplasm. NqrA to NqrE are probably involved in the second step, the conversion of ubisemiquinone to ubiquinol. This is Na(+)-translocating NADH-quinone reductase subunit E from Proteus mirabilis (strain HI4320).